The chain runs to 106 residues: UPF0145 protein Nmul_A0734 (106 aa).

This sequence belongs to the UPF0145 family.

This Nitrosospira multiformis (strain ATCC 25196 / NCIMB 11849 / C 71) protein is UPF0145 protein Nmul_A0734.